The primary structure comprises 497 residues: Di-/tripeptide transporter (497 aa).

The Cytoplasmic portion of the chain corresponds to 1–36; it reads MQNLNKTEKTFFGQPRGLLTLFQTEFWERFSYYGMR. A helical transmembrane segment spans residues 37–55; sequence AILVYYLYALTTADNAGLG. Topologically, residues 56–64 are extracellular; the sequence is LPKAQAMAI. A helical transmembrane segment spans residues 65-83; that stretch reads VSIYGALVYLSTIVGGWVA. The Cytoplasmic segment spans residues 84–92; it reads DRLLGASRT. A helical membrane pass occupies residues 93-111; sequence IFLGGILITLGHVALATPF. Topologically, residues 112-115 are extracellular; the sequence is GLSS. Residues 116 to 134 form a helical membrane-spanning segment; sequence LFVALFLIILGTGMLKPNI. At 135-154 the chain is on the cytoplasmic side; sequence SNMVGHLYSKDDSRRDTGFN. The helical transmembrane segment at 155-173 threads the bilayer; sequence IFVVGINMGSLIAPLIVGT. At 174 to 181 the chain is on the extracellular side; it reads VGQGVNYH. A helical membrane pass occupies residues 182–200; it reads LGFSLAAIGMIFALFAYWY. The Cytoplasmic portion of the chain corresponds to 201–224; it reads GRLRHFPEIGREPSNPMDAKAKRN. The chain crosses the membrane as a helical span at residues 225–243; it reads FIITLTIVLIVALIGFFLI. Over 244–254 the chain is Extracellular; the sequence is YQASPANFINN. Residues 255 to 273 form a helical membrane-spanning segment; it reads FINVLSIIGIVVPIIYFVM. Topologically, residues 274–293 are cytoplasmic; sequence MFTSKKVESDERRKLTAYIP. The chain crosses the membrane as a helical span at residues 294–312; that stretch reads LFLSAIVFWAIEEQSSTII. The Extracellular portion of the chain corresponds to 313–335; it reads AVWGESRSNLNPTWFGFTFHIDP. The helical transmembrane segment at 336–354 threads the bilayer; sequence SWYQLLNPLFIVLLSPIFV. At 355–372 the chain is on the cytoplasmic side; that stretch reads RIWNKLGDRQPSTIVKFG. Residues 373 to 391 form a helical membrane-spanning segment; that stretch reads LGLMLTGASYLIMTLPGLL. Residues 392–425 are Extracellular-facing; that stretch reads NGTSGRASALWLVLMFAVQMAGELLVSPVGLSVS. A helical transmembrane segment spans residues 426-444; sequence TKLAPVAFQSQMMAMWFLA. Residues 445 to 497 are Cytoplasmic-facing; that stretch reads DSTSQAINAQITPIFKAATEVHFFAITGIIGIIVGIILLIIKKPILKLMGDVR.

This sequence belongs to the major facilitator superfamily. Proton-dependent oligopeptide transporter (POT/PTR) (TC 2.A.17) family.

It localises to the cell membrane. Functionally, proton-dependent uptake of di- or tri-peptides. The sequence is that of Di-/tripeptide transporter (dtpT) from Lactococcus lactis subsp. cremoris (Streptococcus cremoris).